Here is a 298-residue protein sequence, read N- to C-terminus: DNA repair protein RecO (298 aa).

The protein belongs to the RecO family.

Functionally, involved in DNA repair and RecF pathway recombination. The polypeptide is DNA repair protein RecO (Cupriavidus metallidurans (strain ATCC 43123 / DSM 2839 / NBRC 102507 / CH34) (Ralstonia metallidurans)).